The primary structure comprises 416 residues: S-adenosylmethionine synthase (416 aa).

ATP is bound at residue His-14. Asp-16 contributes to the Mg(2+) binding site. Glu-42 contributes to the K(+) binding site. 2 residues coordinate L-methionine: Glu-55 and Gln-98. Residues 98–108 are flexible loop; it reads QSPDIARGVDT. ATP contacts are provided by residues 173 to 175, 249 to 250, Asp-258, 264 to 265, Ala-281, and Lys-285; these read DGK, KF, and RK. Asp-258 contributes to the L-methionine binding site. Lys-289 is an L-methionine binding site.

The protein belongs to the AdoMet synthase family. In terms of assembly, homotetramer; dimer of dimers. It depends on Mg(2+) as a cofactor. Requires K(+) as cofactor.

It is found in the cytoplasm. It catalyses the reaction L-methionine + ATP + H2O = S-adenosyl-L-methionine + phosphate + diphosphate. The protein operates within amino-acid biosynthesis; S-adenosyl-L-methionine biosynthesis; S-adenosyl-L-methionine from L-methionine: step 1/1. Its function is as follows. Catalyzes the formation of S-adenosylmethionine (AdoMet) from methionine and ATP. The overall synthetic reaction is composed of two sequential steps, AdoMet formation and the subsequent tripolyphosphate hydrolysis which occurs prior to release of AdoMet from the enzyme. This is S-adenosylmethionine synthase from Thermosynechococcus vestitus (strain NIES-2133 / IAM M-273 / BP-1).